We begin with the raw amino-acid sequence, 692 residues long: Glycine--tRNA ligase beta subunit (692 aa).

This sequence belongs to the class-II aminoacyl-tRNA synthetase family. Tetramer of two alpha and two beta subunits.

Its subcellular location is the cytoplasm. The catalysed reaction is tRNA(Gly) + glycine + ATP = glycyl-tRNA(Gly) + AMP + diphosphate. This Oceanobacillus iheyensis (strain DSM 14371 / CIP 107618 / JCM 11309 / KCTC 3954 / HTE831) protein is Glycine--tRNA ligase beta subunit.